The following is a 229-amino-acid chain: Large ribosomal subunit protein uL1 (229 aa).

Belongs to the universal ribosomal protein uL1 family. In terms of assembly, part of the 50S ribosomal subunit.

In terms of biological role, binds directly to 23S rRNA. The L1 stalk is quite mobile in the ribosome, and is involved in E site tRNA release. Its function is as follows. Protein L1 is also a translational repressor protein, it controls the translation of the L11 operon by binding to its mRNA. The sequence is that of Large ribosomal subunit protein uL1 from Ureaplasma parvum serovar 3 (strain ATCC 27815 / 27 / NCTC 11736).